The chain runs to 173 residues: NADH-ubiquinone oxidoreductase chain 6 (173 aa).

Transmembrane regions (helical) follow at residues 1-21 (MTYF…AVAS), 27-47 (YGVV…LSLG), 48-68 (VSFV…VVFV), 87-107 (VVGY…VGGF), and 139-159 (CGVG…FVVL).

This sequence belongs to the complex I subunit 6 family.

Its subcellular location is the mitochondrion membrane. The enzyme catalyses a ubiquinone + NADH + 5 H(+)(in) = a ubiquinol + NAD(+) + 4 H(+)(out). Core subunit of the mitochondrial membrane respiratory chain NADH dehydrogenase (Complex I) that is believed to belong to the minimal assembly required for catalysis. Complex I functions in the transfer of electrons from NADH to the respiratory chain. The immediate electron acceptor for the enzyme is believed to be ubiquinone. The polypeptide is NADH-ubiquinone oxidoreductase chain 6 (MT-ND6) (Ptychoramphus aleuticus (Cassin's auklet)).